A 557-amino-acid polypeptide reads, in one-letter code: Dihydroxy-acid dehydratase (557 aa).

Asp78 lines the Mg(2+) pocket. Residue Cys119 coordinates [2Fe-2S] cluster. Positions 120 and 121 each coordinate Mg(2+). The residue at position 121 (Lys121) is an N6-carboxylysine. Cys192 serves as a coordination point for [2Fe-2S] cluster. Position 442 (Glu442) interacts with Mg(2+). Catalysis depends on Ser468, which acts as the Proton acceptor.

It belongs to the IlvD/Edd family. As to quaternary structure, homodimer. Requires [2Fe-2S] cluster as cofactor. Mg(2+) serves as cofactor.

The catalysed reaction is (2R)-2,3-dihydroxy-3-methylbutanoate = 3-methyl-2-oxobutanoate + H2O. The enzyme catalyses (2R,3R)-2,3-dihydroxy-3-methylpentanoate = (S)-3-methyl-2-oxopentanoate + H2O. It functions in the pathway amino-acid biosynthesis; L-isoleucine biosynthesis; L-isoleucine from 2-oxobutanoate: step 3/4. Its pathway is amino-acid biosynthesis; L-valine biosynthesis; L-valine from pyruvate: step 3/4. Functionally, functions in the biosynthesis of branched-chain amino acids. Catalyzes the dehydration of (2R,3R)-2,3-dihydroxy-3-methylpentanoate (2,3-dihydroxy-3-methylvalerate) into 2-oxo-3-methylpentanoate (2-oxo-3-methylvalerate) and of (2R)-2,3-dihydroxy-3-methylbutanoate (2,3-dihydroxyisovalerate) into 2-oxo-3-methylbutanoate (2-oxoisovalerate), the penultimate precursor to L-isoleucine and L-valine, respectively. The sequence is that of Dihydroxy-acid dehydratase from Bacillus cereus (strain 03BB102).